A 269-amino-acid polypeptide reads, in one-letter code: Phosphatidylglycerol--prolipoprotein diacylglyceryl transferase (269 aa).

Helical transmembrane passes span 21–41 (WYGI…VLEG), 54–74 (LLLY…VVFE), and 88–108 (IWDG…VILI). Residue Arg-136 participates in a 1,2-diacyl-sn-glycero-3-phospho-(1'-sn-glycerol) binding. 2 helical membrane passes run 206–226 (GEVV…IEGM) and 236–256 (LRVS…AIFY).

This sequence belongs to the Lgt family.

It is found in the cell membrane. The enzyme catalyses L-cysteinyl-[prolipoprotein] + a 1,2-diacyl-sn-glycero-3-phospho-(1'-sn-glycerol) = an S-1,2-diacyl-sn-glyceryl-L-cysteinyl-[prolipoprotein] + sn-glycerol 1-phosphate + H(+). It participates in protein modification; lipoprotein biosynthesis (diacylglyceryl transfer). In terms of biological role, catalyzes the transfer of the diacylglyceryl group from phosphatidylglycerol to the sulfhydryl group of the N-terminal cysteine of a prolipoprotein, the first step in the formation of mature lipoproteins. This Ligilactobacillus salivarius (strain UCC118) (Lactobacillus salivarius) protein is Phosphatidylglycerol--prolipoprotein diacylglyceryl transferase.